The primary structure comprises 559 residues: Coiled-coil domain-containing protein 63 (559 aa).

Coiled-coil stretches lie at residues 14-70 (ELSE…QAET), 185-261 (EKAA…KLKS), and 364-414 (QQQS…VEKL).

Plays a role in spermiogenesis. Involved in the elongation of flagella and the formation of sperm heads. This chain is Coiled-coil domain-containing protein 63, found in Rattus norvegicus (Rat).